Reading from the N-terminus, the 320-residue chain is Calnexin-independence factor 1 (320 aa).

A disordered region spans residues 16-36; the sequence is SAETSVGEKQPKRKRSEVRAE.

It localises to the nucleus. The protein localises to the nucleolus. Functionally, induces a stably inheritable state of calnexin independence called the Cin state when overexpressed. In Schizosaccharomyces pombe (strain 972 / ATCC 24843) (Fission yeast), this protein is Calnexin-independence factor 1 (cif1).